The following is a 302-amino-acid chain: Tyrosine recombinase XerC (302 aa).

The 88-residue stretch at 2 to 89 folds into the Core-binding (CB) domain; sequence QPLMEQIRAF…AIRSFYRHLL (88 aa). The region spanning 110 to 289 is the Tyr recombinase domain; sequence RLPFHLDIDQ…SLDRLMEVYD (180 aa). Catalysis depends on residues Arg-150, Lys-174, His-241, Arg-244, and His-267. Residue Tyr-276 is the O-(3'-phospho-DNA)-tyrosine intermediate of the active site.

The protein belongs to the 'phage' integrase family. XerC subfamily. In terms of assembly, forms a cyclic heterotetrameric complex composed of two molecules of XerC and two molecules of XerD.

It localises to the cytoplasm. In terms of biological role, site-specific tyrosine recombinase, which acts by catalyzing the cutting and rejoining of the recombining DNA molecules. The XerC-XerD complex is essential to convert dimers of the bacterial chromosome into monomers to permit their segregation at cell division. It also contributes to the segregational stability of plasmids. This chain is Tyrosine recombinase XerC, found in Pelobacter propionicus (strain DSM 2379 / NBRC 103807 / OttBd1).